A 404-amino-acid chain; its full sequence is Glucose-1-phosphate adenylyltransferase (404 aa).

Residues Tyr99, Gly164, 179-180 (EK), and Ser197 contribute to the alpha-D-glucose 1-phosphate site.

The protein belongs to the bacterial/plant glucose-1-phosphate adenylyltransferase family. In terms of assembly, homotetramer.

It carries out the reaction alpha-D-glucose 1-phosphate + ATP + H(+) = ADP-alpha-D-glucose + diphosphate. It participates in glycan biosynthesis; glycogen biosynthesis. Functionally, involved in the biosynthesis of ADP-glucose, a building block required for the elongation reactions to produce glycogen. Catalyzes the reaction between ATP and alpha-D-glucose 1-phosphate (G1P) to produce pyrophosphate and ADP-Glc. The chain is Glucose-1-phosphate adenylyltransferase from Rhodococcus jostii (strain RHA1).